The following is a 397-amino-acid chain: Riboflavin biosynthesis protein RibBA (397 aa).

Residues 1–199 (MFHRIEEALE…IEDLIAYRRH (199 aa)) form a DHBP synthase region. D-ribulose 5-phosphate-binding positions include 26–27 (RE), Asp-31, 138–142 (RAGHT), and Glu-162. Mg(2+) is bound at residue Glu-27. Residue His-141 coordinates Mg(2+). The segment at 200-397 (HETFVTKEVE…VTKLGHLLNL (198 aa)) is GTP cyclohydrolase II. 250–254 (RVHSE) serves as a coordination point for GTP. Residues Cys-255, Cys-266, and Cys-268 each coordinate Zn(2+). GTP contacts are provided by residues Gln-271, 293 to 295 (EGR), and Thr-315. Asp-327 acts as the Proton acceptor; for GTP cyclohydrolase activity in catalysis. Residue Arg-329 is the Nucleophile; for GTP cyclohydrolase activity of the active site. 2 residues coordinate GTP: Thr-350 and Lys-355.

It in the N-terminal section; belongs to the DHBP synthase family. In the C-terminal section; belongs to the GTP cyclohydrolase II family. Mg(2+) is required as a cofactor. Requires Mn(2+) as cofactor. Zn(2+) serves as cofactor.

It carries out the reaction D-ribulose 5-phosphate = (2S)-2-hydroxy-3-oxobutyl phosphate + formate + H(+). The enzyme catalyses GTP + 4 H2O = 2,5-diamino-6-hydroxy-4-(5-phosphoribosylamino)-pyrimidine + formate + 2 phosphate + 3 H(+). It participates in cofactor biosynthesis; riboflavin biosynthesis; 2-hydroxy-3-oxobutyl phosphate from D-ribulose 5-phosphate: step 1/1. Its pathway is cofactor biosynthesis; riboflavin biosynthesis; 5-amino-6-(D-ribitylamino)uracil from GTP: step 1/4. Its function is as follows. Catalyzes the conversion of D-ribulose 5-phosphate to formate and 3,4-dihydroxy-2-butanone 4-phosphate. In terms of biological role, catalyzes the conversion of GTP to 2,5-diamino-6-ribosylamino-4(3H)-pyrimidinone 5'-phosphate (DARP), formate and pyrophosphate. The protein is Riboflavin biosynthesis protein RibBA of Bacillus cytotoxicus (strain DSM 22905 / CIP 110041 / 391-98 / NVH 391-98).